A 492-amino-acid polypeptide reads, in one-letter code: Prenylcysteine oxidase 1-like (492 aa).

A signal peptide spans 1–21 (MAHAARLLAALAALLAAAATG). The N-linked (GlcNAc...) asparagine glycan is linked to Asn-340.

It belongs to the prenylcysteine oxidase family. It depends on FAD as a cofactor.

It is found in the secreted. Functionally, likely to have oxidoreductase activity. Required in the mevalonate pathway to regulate prenylation and enhances the bactericidal activity of neutrophils. The polypeptide is Prenylcysteine oxidase 1-like (PCYOX1L) (Bos taurus (Bovine)).